The primary structure comprises 538 residues: Chaperonin GroEL (538 aa).

Residues 29–32 (TLGP), 86–90 (DGTTT), Gly413, 477–479 (NAA), and Asp493 contribute to the ATP site.

This sequence belongs to the chaperonin (HSP60) family. As to quaternary structure, forms a cylinder of 14 subunits composed of two heptameric rings stacked back-to-back. Interacts with the co-chaperonin GroES.

The protein localises to the cytoplasm. The catalysed reaction is ATP + H2O + a folded polypeptide = ADP + phosphate + an unfolded polypeptide.. Functionally, together with its co-chaperonin GroES, plays an essential role in assisting protein folding. The GroEL-GroES system forms a nano-cage that allows encapsulation of the non-native substrate proteins and provides a physical environment optimized to promote and accelerate protein folding. This Scardovia inopinata (Bifidobacterium inopinatum) protein is Chaperonin GroEL.